Reading from the N-terminus, the 48-residue chain is MRVKITLICSSCGNKNYISSKNKATHPEKVETMKFCPKERIVTLHREG.

It belongs to the bacterial ribosomal protein bL33 family.

The protein is Large ribosomal subunit protein bL33B of Lactococcus lactis subsp. cremoris (strain MG1363).